Reading from the N-terminus, the 1434-residue chain is Probable ATP-dependent RNA helicase spindle-E (1434 aa).

Positions Val-66–Asp-86 are disordered. In terms of domain architecture, Helicase ATP-binding spans Met-127–Val-294. Gly-140–Thr-147 lines the ATP pocket. The DEAH box motif lies at Asp-240–His-243. The 173-residue stretch at Gln-354–Asp-526 folds into the Helicase C-terminal domain. Positions Ala-938–Asp-1001 constitute a Tudor domain.

It belongs to the DEAD box helicase family. DEAH subfamily.

Its subcellular location is the cytoplasm. It catalyses the reaction ATP + H2O = ADP + phosphate + H(+). Functionally, probable ATP-binding RNA helicase which plays a central role during spermatogenesis and oogenesis by repressing transposable elements and preventing their mobilization, which is essential for the germline integrity. Acts via the piRNA metabolic process, which mediates the repression of transposable elements during meiosis by forming complexes composed of piRNAs and Piwi and govern the methylation and subsequent repression of transposons. Involved in the repression of LTR retrotransposon copia. Also involved in telomere regulation by repressing specialized telomeric retroelements HeT-A, TAHRE, and TART; Drosophila telomeres being maintained by transposition of specialized telomeric retroelements. Involved in telomeric trans-silencing, a repression mechanism by which a transposon or a transgene inserted in subtelomeric heterochromatin has the capacity to repress in trans in the female germline, a homologous transposon, or transgene located in euchromatin. Involved in the repression of testis-expressed Stellate genes by the homologous Su(Ste) repeats. Required for anteroposterior and dorsoventral axis formation during oogenesis. This is Probable ATP-dependent RNA helicase spindle-E (spn-E) from Drosophila grimshawi (Hawaiian fruit fly).